Here is a 228-residue protein sequence, read N- to C-terminus: Protein 33K (228 aa).

The segment at 1–156 is disordered; that stretch reads MAPKKKLQLP…GALRLAPNEP (156 aa). The span at 15-53 shows a compositional bias: acidic residues; sequence TDEEEYWDSQAEEVLDEEEEMMEDWDSLDEASEAEEVSD. Low complexity-rich tracts occupy residues 54 to 63 and 104 to 119; these read ETPSPSVAFP and AAPT…ATAA. The interval 171 to 198 is necessary for nuclear subcellular location; sequence YAIFQQSRGQEQELKIKNRSLRSLTRSC. The segment at 177 to 197 is RS-repeat; required for splicing enhancer activity; sequence SRGQEQELKIKNRSLRSLTRS.

Belongs to the adenoviridae splicing factor family. In terms of assembly, homooligomer. Interacts with DBP; this interaction occurs at a unique vertex during genome packaging. Interacts with IVa2; this interaction occurs at a unique vertex during genome packaging and seems to potentiate IVa2 and 33K oligomerization. Post-translationally, phosphorylated in vitro by human PKA and PRKDC. PRKDC inhibits, whereas PKA activates the splicing factor.

It localises to the host nucleus. Functionally, promotes alternative splicing of late transcripts by promoting splicing at weak 3' splice sites. Required for the temporal activation of major late pre-mRNA splicing at late times of infection. Induces the splicing and expression of the late capsid vertex protein. Probably functions as the small terminase that is part of the molecular motor that translocates genomic DNA in empty capsid during DNA packaging. This motor is located at a unique vertex and comprises at least the IVa2 ATPase, the small terminase 33K and probably a portal. Forms a ring-like structure of about 17 nm in which genomic DNA is translocated into the capsid. Stimulates IVa2 ATPase activity in the presence of the viral genome. Once the DNA is packaged, the terminase detaches: the 33K protein is present in the empty particles, but not in the mature virions. Also involved in virion assembly. The sequence is that of Protein 33K from Homo sapiens (Human).